The following is a 46-amino-acid chain: Diuretic hormone (46 aa).

Ile-46 is modified (isoleucine amide).

This sequence belongs to the sauvagine/corticotropin-releasing factor/urotensin I family.

Its subcellular location is the secreted. Its function is as follows. Regulation of fluid secretion. Stimulates primary urine secretion by Malpighian tubules and causes a dose-dependent stimulation of cAMP levels in the tubules. The protein is Diuretic hormone of Periplaneta americana (American cockroach).